The primary structure comprises 258 residues: Isoprenyl transferase (258 aa).

Residue D38 is part of the active site. D38 provides a ligand contact to Mg(2+). Substrate is bound by residues 39–42, W43, R51, H55, and 83–85; these read GNGR and STE. The active-site Proton acceptor is N86. Substrate is bound by residues W87, R89, R206, and 212 to 214; that span reads RIS. Residue E225 coordinates Mg(2+).

Belongs to the UPP synthase family. Homodimer. Mg(2+) serves as cofactor.

Its function is as follows. Catalyzes the condensation of isopentenyl diphosphate (IPP) with allylic pyrophosphates generating different type of terpenoids. The protein is Isoprenyl transferase of Bacillus cereus (strain ATCC 14579 / DSM 31 / CCUG 7414 / JCM 2152 / NBRC 15305 / NCIMB 9373 / NCTC 2599 / NRRL B-3711).